The following is a 38-amino-acid chain: Esterase-5 (38 aa).

The tract at residues 1-38 (SAAADPLIVELPNGKVRGRDNEGYYEAEGIPRAEPPVG) is disordered.

The protein belongs to the type-B carboxylesterase/lipase family.

It carries out the reaction a carboxylic ester + H2O = an alcohol + a carboxylate + H(+). The sequence is that of Esterase-5 (Est-5) from Drosophila mojavensis (Fruit fly).